A 510-amino-acid polypeptide reads, in one-letter code: Outer spore wall protein 7 (510 aa).

The signal sequence occupies residues 1–23; the sequence is MKAVFKVTTALLACVFIARYLVC. The segment at 167–195 is disordered; that stretch reads FETDSETEDYEDDENENEDEDEDEDEDDV. A compositionally biased stretch (acidic residues) spans 169-195; it reads TDSETEDYEDDENENEDEDEDEDEDDV. At Tyr354 the chain carries Phosphotyrosine.

This sequence belongs to the OSW/SHE family.

Involved in spore wall assembly. This chain is Outer spore wall protein 7, found in Saccharomyces cerevisiae (strain ATCC 204508 / S288c) (Baker's yeast).